We begin with the raw amino-acid sequence, 386 residues long: Tumor necrosis factor receptor superfamily member 10D (386 aa).

Disordered regions lie at residues 1–25 and 62–90; these read MGLW…ARTA and DEVP…SHRS. The first 55 residues, 1–55, serve as a signal peptide directing secretion; that stretch reads MGLWGQSVPTASSARAGRYPGARTASGTRPWLLDPKILKFVVFIVAVLLPVRVDS. At 56–211 the chain is on the extracellular side; sequence ATIPRQDEVP…ILGMLASPYH (156 aa). 3 TNFR-Cys repeats span residues 58–97, 98–139, and 140–180; these read IPRQ…GACN, PCTE…DTVC, and QCEK…DIKC. Residues 64–75 show a composition bias toward polar residues; it reads VPQQTVAPQQQR. Intrachain disulfides connect Cys83/Cys96, Cys99/Cys115, Cys118/Cys131, Cys121/Cys139, Cys141/Cys155, Cys158/Cys172, and Cys162/Cys180. N-linked (GlcNAc...) asparagine glycosylation is present at Asn127. N-linked (GlcNAc...) asparagine glycosylation is present at Asn182. The helical transmembrane segment at 212–232 threads the bilayer; it reads YLIIIVVLVIILAVVVVGFSC. The Cytoplasmic portion of the chain corresponds to 233-386; the sequence is RKKFISYLKG…DEAGSATSCL (154 aa). A Death; truncated domain is found at 340-366; it reads SADISTLLDASATLEEGHAKETIQDQL.

In terms of tissue distribution, widely expressed, in particular in fetal kidney, lung and liver, and in adult testis and liver. Also expressed in peripheral blood leukocytes, colon and small intestine, ovary, prostate, thymus, spleen, pancreas, kidney, lung, placenta and heart.

The protein localises to the membrane. Its function is as follows. Receptor for the cytotoxic ligand TRAIL. Contains a truncated death domain and hence is not capable of inducing apoptosis but protects against TRAIL-mediated apoptosis. Reports are contradictory with regards to its ability to induce the NF-kappa-B pathway. According to PubMed:9382840, it cannot but according to PubMed:9430226, it can induce the NF-kappa-B pathway. The sequence is that of Tumor necrosis factor receptor superfamily member 10D from Homo sapiens (Human).